The chain runs to 528 residues: Propionate catabolism operon regulatory protein (528 aa).

The Sigma-54 factor interaction domain occupies 218–461 (MLGQSPQMEQ…RNMMERLALF (244 aa)). Residue 318–327 (AHGGTLFLDE) participates in ATP binding. Residues 508–527 (KTAAANYLGISRTTFWRRLK) constitute a DNA-binding region (H-T-H motif).

Its function is as follows. Involved in the transcriptional regulation of the propionate catabolism operon. In Escherichia coli (strain K12), this protein is Propionate catabolism operon regulatory protein (prpR).